The chain runs to 232 residues: Peptidyl-prolyl cis-trans isomerase CYP26-1 (232 aa).

One can recognise a PPIase cyclophilin-type domain in the interval 7–166 (FFDLTVDGKP…KPVVIADCGE (160 aa)). N-linked (GlcNAc...) asparagine glycosylation occurs at asparagine 108. Residues 212 to 232 (YYLINIVVACMVLMCFWSWFV) form a helical membrane-spanning segment.

This sequence belongs to the cyclophilin-type PPIase family. As to expression, expressed only in flowers.

It is found in the membrane. The enzyme catalyses [protein]-peptidylproline (omega=180) = [protein]-peptidylproline (omega=0). PPIases accelerate the folding of proteins. It catalyzes the cis-trans isomerization of proline imidic peptide bonds in oligopeptides. This is Peptidyl-prolyl cis-trans isomerase CYP26-1 (CYP26-1) from Arabidopsis thaliana (Mouse-ear cress).